Reading from the N-terminus, the 324-residue chain is Homeobox protein engrailed-2 (324 aa).

Disordered regions lie at residues 1–59 (MEEK…HQHP), 89–174 (GGAR…VLKA), and 215–240 (DRPSSGPRSRKPKKKNPNKEDKRPRT). The span at 89 to 110 (GGARGGEGGAGTTEGGGGGAGG) shows a compositional bias: gly residues. A DNA-binding region (homeobox) is located at residues 235 to 294 (DKRPRTAFTAEQLQRLKAEFQTNRYLTEQRRQSLAQELSLNESQIKIWFQNKRAKIKKAT).

It belongs to the engrailed homeobox family. As to expression, cerebellar granule cells.

Its subcellular location is the nucleus. This chain is Homeobox protein engrailed-2 (En2), found in Mus musculus (Mouse).